We begin with the raw amino-acid sequence, 393 residues long: Protein TsgA (393 aa).

12 helical membrane-spanning segments follow: residues 11–31 (WISF…GMVM), 51–71 (FLNA…EIVP), 78–98 (FGFL…SLAL), 101–121 (TAMF…TFLI), 134–154 (LLFT…IAAF), 162–182 (WYWV…LTFG), 206–226 (IGVL…LGFI), 245–265 (TLVS…SFIL), 273–293 (ILTV…TGTP), 297–317 (AWSI…IITL), 332–352 (FVLT…GPIV), and 361–381 (LLTA…LGFV).

Belongs to the major facilitator superfamily. TsgA family.

Its subcellular location is the cell inner membrane. The protein is Protein TsgA of Shigella boydii serotype 4 (strain Sb227).